The following is a 520-amino-acid chain: DEP domain-containing protein 7 (520 aa).

Residues 45-137 (ALTQVEVKKR…SSCSLYRFIN (93 aa)) enclose the DEP domain. A disordered region spans residues 148–167 (KSNGRCTPQRPKHSSFQSAP).

This sequence belongs to the DEPDC7 family.

This Xenopus tropicalis (Western clawed frog) protein is DEP domain-containing protein 7 (depdc7).